The sequence spans 288 residues: Protein sprouty homolog 3 (288 aa).

An SPR domain is found at 154 to 260; the sequence is KCVPCTAARP…GYDSLRRPGC (107 aa).

Belongs to the sprouty family. Interacts with TESK1. Interacts with USP11. Interacts with CAV1 (via C-terminus). As to expression, widely expressed; particularly in the fetal tissues. Expressed in the brain with expression the highest in Purkinje cells in the cerebellum (at protein level). Expressed in the myocardium of the heart.

It localises to the cytoplasm. Inhibits neurite branching, arbor length and neurite complexity. Inhibits EGF-mediated p42/44 ERK signaling. Negatively regulates the MAPK cascade, resulting in a reduction of extracellular matrix protein accumulation. May function as an antagonist of fibroblast growth factor (FGF) pathways and may negatively modulate respiratory organogenesis. In Homo sapiens (Human), this protein is Protein sprouty homolog 3.